The primary structure comprises 489 residues: Cobyric acid synthase (489 aa).

The 194-residue stretch at 251–444 folds into the GATase cobBQ-type domain; the sequence is GLIIAVIRLP…LHGIFANDTF (194 aa). The active-site Nucleophile is the Cys-329. The active site involves His-436.

Belongs to the CobB/CobQ family. CobQ subfamily.

It functions in the pathway cofactor biosynthesis; adenosylcobalamin biosynthesis. In terms of biological role, catalyzes amidations at positions B, D, E, and G on adenosylcobyrinic A,C-diamide. NH(2) groups are provided by glutamine, and one molecule of ATP is hydrogenolyzed for each amidation. This chain is Cobyric acid synthase, found in Chloroflexus aurantiacus (strain ATCC 29366 / DSM 635 / J-10-fl).